A 427-amino-acid chain; its full sequence is Peptidase B (427 aa).

The Mn(2+) site is built by Lys-195 and Asp-200. Residue Lys-207 is part of the active site. Mn(2+) contacts are provided by Asp-218, Asp-277, and Glu-279. Arg-281 is an active-site residue.

Belongs to the peptidase M17 family. As to quaternary structure, homohexamer. The cofactor is Mn(2+).

The protein localises to the cytoplasm. The catalysed reaction is Release of an N-terminal amino acid, Xaa, from a peptide or arylamide. Xaa is preferably Glu or Asp but may be other amino acids, including Leu, Met, His, Cys and Gln.. In terms of biological role, probably plays an important role in intracellular peptide degradation. The chain is Peptidase B from Shigella boydii serotype 18 (strain CDC 3083-94 / BS512).